A 272-amino-acid polypeptide reads, in one-letter code: Ribosomal RNA small subunit methyltransferase A (272 aa).

6 residues coordinate S-adenosyl-L-methionine: asparagine 20, leucine 22, glycine 47, glutamate 68, aspartate 93, and asparagine 114.

The protein belongs to the class I-like SAM-binding methyltransferase superfamily. rRNA adenine N(6)-methyltransferase family. RsmA subfamily.

The protein localises to the cytoplasm. The enzyme catalyses adenosine(1518)/adenosine(1519) in 16S rRNA + 4 S-adenosyl-L-methionine = N(6)-dimethyladenosine(1518)/N(6)-dimethyladenosine(1519) in 16S rRNA + 4 S-adenosyl-L-homocysteine + 4 H(+). Functionally, specifically dimethylates two adjacent adenosines (A1518 and A1519) in the loop of a conserved hairpin near the 3'-end of 16S rRNA in the 30S particle. May play a critical role in biogenesis of 30S subunits. This Aliivibrio fischeri (strain ATCC 700601 / ES114) (Vibrio fischeri) protein is Ribosomal RNA small subunit methyltransferase A.